The primary structure comprises 274 residues: Transcription factor MYB32 (274 aa).

2 HTH myb-type domains span residues 9–61 and 62–116; these read KDHT…INYL and RPDL…KRKL. DNA-binding regions (H-T-H motif) lie at residues 37–61 and 89–112; these read WRSL…INYL and WSLI…NTHV. A disordered region spans residues 123–144; the sequence is PATHRPINETKTSQDSSDSSKT.

In terms of tissue distribution, mostly expressed in roots, and, to a lower extent, in stems, flower buds, and siliques.

It localises to the nucleus. The chain is Transcription factor MYB32 (MYB32) from Arabidopsis thaliana (Mouse-ear cress).